We begin with the raw amino-acid sequence, 109 residues long: Thioredoxin 1 (109 aa).

Residues 2–109 (SDKIIHLTDD…LKEFLDANLA (108 aa)) form the Thioredoxin domain. Residues Cys33 and Cys36 each act as nucleophile in the active site. An intrachain disulfide couples Cys33 to Cys36. N6-acetyllysine is present on Lys70.

The protein belongs to the thioredoxin family. As to quaternary structure, monomer.

Participates in various redox reactions through the reversible oxidation of its active center dithiol to a disulfide and catalyzes dithiol-disulfide exchange reactions. The protein is Thioredoxin 1 (trxA) of Escherichia coli O157:H7.